The sequence spans 330 residues: Agamous-like MADS-box protein AGL75 (330 aa).

In terms of domain architecture, MADS-box spans 19–61 (TSLSNRLETIFKKASELCTLCDIEACVIYYGPDGELKTWPKEK).

Interacts with MEE14/CBP1.

It is found in the nucleus. In terms of biological role, probable transcription factor that may function in the maintenance of the proper function of the central cell in pollen tube attraction. This chain is Agamous-like MADS-box protein AGL75, found in Arabidopsis thaliana (Mouse-ear cress).